Reading from the N-terminus, the 241-residue chain is Probable cobalt-factor III C(17)-methyltransferase (241 aa).

This sequence belongs to the precorrin methyltransferase family.

The catalysed reaction is Co(II)-factor III + S-adenosyl-L-methionine + H(+) = Co(II)-factor IV + S-adenosyl-L-homocysteine. It participates in cofactor biosynthesis; adenosylcobalamin biosynthesis; cob(II)yrinate a,c-diamide from sirohydrochlorin (anaerobic route): step 3/10. In terms of biological role, methyltransferase that likely catalyzes the ring contraction and methylation of C-17 in cobalt-factor III to form cobalt-factor IV. May also convert cobalt-precorrin-3 to cobalt-precorrin-4. The polypeptide is Probable cobalt-factor III C(17)-methyltransferase (cbiH) (Salmonella typhimurium (strain LT2 / SGSC1412 / ATCC 700720)).